The chain runs to 857 residues: KH domain-containing protein HEN4 (857 aa).

Positions 1-15 (MERNSVKFHAEKRSG) are enriched in basic and acidic residues. Residues 1 to 27 (MERNSVKFHAEKRSGAFDPGSGFGSSK) form a disordered region. KH domains follow at residues 46 to 110 (HAAF…KLGA), 149 to 217 (TVVC…LVSI), 451 to 521 (DVVF…IMLI), and 541 to 610 (SITA…IFHI). The interval 644-755 (SDNPLSIGSH…RGLSDASGGL (112 aa)) is disordered. Composition is skewed to polar residues over residues 645–665 (DNPL…NSSS) and 673–688 (SFLS…SRSV). Positions 718 to 730 (FTMDHSDNSHHLT) are enriched in basic and acidic residues. The span at 746–755 (RGLSDASGGL) shows a compositional bias: low complexity. The region spanning 775-839 (NTTVEIRVPA…DQTQAAQNLL (65 aa)) is the KH 5 domain.

Interacts with HUA1. Interacts with FLK and PEP.

The protein localises to the nucleus speckle. In terms of biological role, functions in floral reproductive organ identity in the third whorl and floral determinacy specification by specifically promoting the processing of AGAMOUS (AG) pre-mRNA. Functions in association with HUA1 and HUA2. In Arabidopsis thaliana (Mouse-ear cress), this protein is KH domain-containing protein HEN4.